The primary structure comprises 471 residues: Regulator of microtubule dynamics protein 3 (471 aa).

Residues 1-9 (MSSLGTLGG) lie on the Mitochondrial intermembrane side of the membrane. Residues 10–32 (ARAGLGLLLGTAAGLGFLCALYS) traverse the membrane as a helical segment. At 33–471 (QRWKRTQRRG…LEELEVILGE (439 aa)) the chain is on the cytoplasmic side. Residues 39–70 (QRRGQSQSQSNSLDYTQTSEPGRQVRPLRAAP) form a disordered region. A compositionally biased stretch (low complexity) spans 41–50 (RGQSQSQSNS). Residues S44, S46, S50, and S57 each carry the phosphoserine modification. A coiled-coil region spans residues 90–123 (LDRLEFVLTSLVALRREVEELRSSLQGLAGQIVG). The FFAT signature appears at 156-162 (VYFTAAS). T159 is modified (phosphothreonine). The disordered stretch occupies residues 169-206 (AESEGGYTTANAESDYERDSERESDGDGEDEVSCETVK). 4 positions are modified to phosphoserine: S182, S192, S212, and S233. Positions 183 to 193 (DYERDSERESD) are enriched in basic and acidic residues.

It belongs to the RMDN family. Interacts with PTPN2. Interacts with microtubules. Interacts with VAPB. Interacts (via FFAT motif) with MOSPD2 (via MSP domain). Interacts (via phosphorylated FFAT motif) with MOSPD2, VAPA and VAPB. Post-translationally, phosphorylation at Thr-160 of the FFAT motif activates interaction with MOSPD2, VAPA and VAPB.

Its subcellular location is the mitochondrion outer membrane. It localises to the cytoplasm. The protein localises to the nucleus. It is found in the cytoskeleton. The protein resides in the spindle. Its subcellular location is the spindle pole. Its function is as follows. Involved in cellular calcium homeostasis regulation. May participate in differentiation and apoptosis of keratinocytes. Overexpression induces apoptosis. This is Regulator of microtubule dynamics protein 3 from Bos taurus (Bovine).